A 449-amino-acid polypeptide reads, in one-letter code: UDP-N-acetylmuramoylalanine--D-glutamate ligase (449 aa).

ATP is bound at residue 118–124; it reads GTNGKTT.

The protein belongs to the MurCDEF family.

Its subcellular location is the cytoplasm. The catalysed reaction is UDP-N-acetyl-alpha-D-muramoyl-L-alanine + D-glutamate + ATP = UDP-N-acetyl-alpha-D-muramoyl-L-alanyl-D-glutamate + ADP + phosphate + H(+). It participates in cell wall biogenesis; peptidoglycan biosynthesis. In terms of biological role, cell wall formation. Catalyzes the addition of glutamate to the nucleotide precursor UDP-N-acetylmuramoyl-L-alanine (UMA). In Staphylococcus aureus (strain MW2), this protein is UDP-N-acetylmuramoylalanine--D-glutamate ligase.